The primary structure comprises 933 residues: Progesterone receptor (933 aa).

The disordered stretch occupies residues 1-157 (MTELKAKGPR…PEDPPAAPAT (157 aa)). The tract at residues 1–164 (MTELKAKGPR…PATQRVLSPL (164 aa)) is AF3; mediates transcriptional activation (in isoform B). The interval 1-566 (MTELKAKGPR…YSFESLPQKI (566 aa)) is modulating, Pro-Rich. K7 is covalently cross-linked (Glycyl lysine isopeptide (Lys-Gly) (interchain with G-Cter in SUMO)). A Phosphoserine modification is found at S20. Positions 55-59 (LDGLL) match the LXXL motif 1 motif. Residues S81 and S102 each carry the phosphoserine modification. Positions 115-119 (LDTLL) match the LXXL motif 2 motif. 2 positions are modified to phosphoserine: S130 and S162. The interval 165-305 (MSRSGCKVGD…LATTVMDFIH (141 aa)) is mediates transcriptional transrepression (in isoform A). Positions 183–187 (KVLPR) match the Nuclear localization signal motif. A phosphoserine mark is found at S190 and S213. The segment at 195 to 241 (LLLPASESPHWSGAPVKPSPQAAAVEVEEEDGSESEESAGPLLKGKP) is disordered. Over residues 220–231 (EVEEEDGSESEE) the composition is skewed to acidic residues. Residues 232–241 (SAGPLLKGKP) are compositionally biased toward low complexity. S294 carries the post-translational modification Phosphoserine; by MAPK1. Positions 331-351 (GGAGAASAFAPPRSSPCASST) are disordered. Residues 335–350 (AASAFAPPRSSPCASS) show a composition bias toward low complexity. Position 345 is a phosphoserine; by MAPK (S345). Residue K388 forms a Glycyl lysine isopeptide (Lys-Gly) (interchain with G-Cter in SUMO); alternate linkage. K388 is covalently cross-linked (Glycyl lysine isopeptide (Lys-Gly) (interchain with G-Cter in ubiquitin); alternate). At S400 the chain carries Phosphoserine; by CDK2. Residues 415-452 (PDFPLGPPPPLPPRATPSRPGEAAVTAAPASASVSSAS) are disordered. Residues 418 to 429 (PLGPPPPLPPRA) show a composition bias toward pro residues. A compositionally biased stretch (low complexity) spans 430 to 452 (TPSRPGEAAVTAAPASASVSSAS). An AF1; mediates transcriptional activation region spans residues 456 to 546 (STLECILYKA…VYPPYLNYLR (91 aa)). A Glycyl lysine isopeptide (Lys-Gly) (interchain with G-Cter in SUMO) cross-link involves residue K531. 2 consecutive NR C4-type zinc fingers follow at residues 567–587 (CLICGDEASGCHYGVLTCGSC) and 603–627 (CAGRNDCIVDKIRRKNCPACRLRKC). The nuclear receptor DNA-binding region spans 567–639 (CLICGDEASG…AGMVLGGRKF (73 aa)). S676 carries the post-translational modification Phosphoserine. Residues 679–913 (QDIQLIPPLI…EFPEMMSEVI (235 aa)) enclose the NR LBD domain. Positions 687-933 (LINLLMSIEP…MVKPLLFHKK (247 aa)) are AF2; mediates transcriptional activation. R766 contributes to the progesterone binding site.

It belongs to the nuclear hormone receptor family. NR3 subfamily. Interacts with SMARD1 and UNC45A. Interacts with CUEDC2; the interaction promotes ubiquitination, decreases sumoylation, and represses transcriptional activity. Interacts with PIAS3; the interaction promotes sumoylation of PR in a hormone-dependent manner, inhibits DNA-binding, and alters nuclear export. Interacts with SP1; the interaction requires ligand-induced phosphorylation on Ser-345 by ERK1/2 MAPK. Interacts with PRMT2. Isoform A interacts with NCOR2. Isoform B (but not isoform A) interacts with NCOA2 and NCOA1. Isoform B (but not isoform A) interacts with KLF9. Interacts with GTF2B. In terms of processing, phosphorylated on multiple serine sites. Several of these sites are hormone-dependent. Phosphorylation on Ser-294 occurs preferentially on isoform B, is highly hormone-dependent and modulates ubiquitination and sumoylation on Lys-388. Phosphorylation on Ser-102 and Ser-345 also requires induction by hormone. Basal phosphorylation on Ser-81, Ser-162, Ser-190 and Ser-400 is increased in response to progesterone and can be phosphorylated in vitro by the CDK2-A1 complex. Increased levels of phosphorylation on Ser-400 also in the presence of EGF, heregulin, IGF, PMA and FBS. Phosphorylation at this site by CDK2 is ligand-independent, and increases nuclear translocation and transcriptional activity. Phosphorylation at Ser-162 and Ser-294, but not at Ser-190, is impaired during the G(2)/M phase of the cell cycle. Phosphorylation on Ser-345 by ERK1/2 MAPK is required for interaction with SP1. Sumoylation is hormone-dependent and represses transcriptional activity. Sumoylation on all three sites is enhanced by PIAS3. Desumoylated by SENP1. Sumoylation on Lys-388, the main site of sumoylation, is repressed by ubiquitination on the same site, and modulated by phosphorylation at Ser-294. Post-translationally, ubiquitination is hormone-dependent and represses sumoylation on the same site. Promoted by MAPK-mediated phosphorylation on Ser-294. Ubiquitinated by UBR5, leading to its degradation: UBR5 specifically recognizes and binds ligand-bound PGR when it is not associated with coactivators (NCOAs). In presence of NCOAs, the UBR5-degron is not accessible, preventing its ubiquitination and degradation. In terms of processing, palmitoylated by ZDHHC7 and ZDHHC21. Palmitoylation is required for plasma membrane targeting and for rapid intracellular signaling via ERK and AKT kinases and cAMP generation. As to expression, in reproductive tissues the expression of isoform A and isoform B varies as a consequence of developmental and hormonal status. Isoform A and isoform B are expressed in comparable levels in uterine glandular epithelium during the proliferative phase of the menstrual cycle. Expression of isoform B but not of isoform A persists in the glands during mid-secretory phase. In the stroma, isoform A is the predominant form throughout the cycle. Heterogeneous isoform expression between the glands of the endometrium basalis and functionalis is implying region-specific responses to hormonal stimuli.

It is found in the nucleus. The protein localises to the cytoplasm. Its subcellular location is the mitochondrion outer membrane. Its function is as follows. The steroid hormones and their receptors are involved in the regulation of eukaryotic gene expression and affect cellular proliferation and differentiation in target tissues. Depending on the isoform, progesterone receptor functions as a transcriptional activator or repressor. In terms of biological role, ligand-dependent transdominant repressor of steroid hormone receptor transcriptional activity including repression of its isoform B, MR and ER. Transrepressional activity may involve recruitment of corepressor NCOR2. Transcriptional activator of several progesteron-dependent promoters in a variety of cell types. Involved in activation of SRC-dependent MAPK signaling on hormone stimulation. Functionally, increases mitochondrial membrane potential and cellular respiration upon stimulation by progesterone. In Homo sapiens (Human), this protein is Progesterone receptor (PGR).